The sequence spans 337 residues: 1-aminocyclopropane-1-carboxylate deaminase (337 aa).

An N6-(pyridoxal phosphate)lysine modification is found at K50. The active-site Nucleophile is the S77.

The protein belongs to the ACC deaminase/D-cysteine desulfhydrase family. As to quaternary structure, homotrimer. Pyridoxal 5'-phosphate is required as a cofactor.

It catalyses the reaction 1-aminocyclopropane-1-carboxylate + H2O = 2-oxobutanoate + NH4(+). In terms of biological role, catalyzes a cyclopropane ring-opening reaction, the irreversible conversion of 1-aminocyclopropane-1-carboxylate (ACC) to ammonia and alpha-ketobutyrate. Allows growth on ACC as a nitrogen source. The polypeptide is 1-aminocyclopropane-1-carboxylate deaminase (Allorhizobium ampelinum (strain ATCC BAA-846 / DSM 112012 / S4) (Agrobacterium vitis (strain S4))).